A 597-amino-acid polypeptide reads, in one-letter code: Arginine--tRNA ligase (597 aa).

The 'HIGH' region motif lies at 125 to 135 (PNTNKPLHLGH).

Belongs to the class-I aminoacyl-tRNA synthetase family. Monomer.

It localises to the cytoplasm. It catalyses the reaction tRNA(Arg) + L-arginine + ATP = L-arginyl-tRNA(Arg) + AMP + diphosphate. The sequence is that of Arginine--tRNA ligase from Parabacteroides distasonis (strain ATCC 8503 / DSM 20701 / CIP 104284 / JCM 5825 / NCTC 11152).